The following is a 382-amino-acid chain: Lipid-A-disaccharide synthase (382 aa).

It belongs to the LpxB family.

The catalysed reaction is 2-N,3-O-bis[(3R)-3-hydroxytetradecanoyl]-alpha-D-glucosaminyl 1-phosphate + UDP-2-N,3-O-bis[(3R)-3-hydroxytetradecanoyl]-alpha-D-glucosamine = lipid A disaccharide (E. coli) + UDP + H(+). It carries out the reaction a lipid X + a UDP-2-N,3-O-bis[(3R)-3-hydroxyacyl]-alpha-D-glucosamine = a lipid A disaccharide + UDP + H(+). Its pathway is glycolipid biosynthesis; lipid IV(A) biosynthesis; lipid IV(A) from (3R)-3-hydroxytetradecanoyl-[acyl-carrier-protein] and UDP-N-acetyl-alpha-D-glucosamine: step 5/6. In terms of biological role, condensation of UDP-2,3-diacylglucosamine and 2,3-diacylglucosamine-1-phosphate to form lipid A disaccharide, a precursor of lipid A, a phosphorylated glycolipid that anchors the lipopolysaccharide to the outer membrane of the cell. This is Lipid-A-disaccharide synthase from Escherichia fergusonii (strain ATCC 35469 / DSM 13698 / CCUG 18766 / IAM 14443 / JCM 21226 / LMG 7866 / NBRC 102419 / NCTC 12128 / CDC 0568-73).